Consider the following 967-residue polypeptide: Sodium/potassium exporting P-type ATPase 1 (967 aa).

Over 1–70 the chain is Cytoplasmic; it reads MEGSGDKRHE…GVNPWKILLR (70 aa). Residues 71 to 91 traverse the membrane as a helical segment; it reads QVSNGLTAVLVVAMVVSFAVK. A topological domain (extracellular) is located at residue Asp92. A helical membrane pass occupies residues 93 to 113; the sequence is YAEAGVLVIVIAFNTIVGFVQ. Residues 114-254 are Cytoplasmic-facing; it reads EYRAEKTMDA…TQSTPMQRKL (141 aa). Residues 255–275 traverse the membrane as a helical segment; it reads NLMAYMLLAFALLLALIVFAV. Over 276 to 283 the chain is Extracellular; sequence NKFNFSTE. N-linked (GlcNAc...) asparagine glycosylation is present at Asn279. A helical transmembrane segment spans residues 284–304; sequence VVIYAIALSIAIIPEGLIAVI. Residues 305–732 lie on the Cytoplasmic side of the membrane; that stretch reads TIVQALGVRR…GRRIFSNIKK (428 aa). Asp340 functions as the 4-aspartylphosphate intermediate in the catalytic mechanism. Mg(2+) contacts are provided by Asp340 and Thr342. 9 residues coordinate ATP: Thr342, Glu425, Lys478, Arg523, Thr587, Gly588, Asp589, Arg651, and Lys657. Mg(2+) is bound at residue Asp676. Residue Asn679 participates in ATP binding. A helical transmembrane segment spans residues 733 to 753; the sequence is FVLHLLSTNVGQVIVLLIGLA. The Extracellular portion of the chain corresponds to 754 to 812; it reads FKDRTGTSVFPLSPVQILFLNLVTGTPPAMALGIEPASSSVMQVPPHVKGLFTVELIMD. A helical membrane pass occupies residues 813-833; the sequence is IFIFGTFIGILALASWVLVIY. Residues 834-900 are Cytoplasmic-facing; it reads PFGNSDLATL…GGASRFFSNK (67 aa). Residues 901 to 921 form a helical membrane-spanning segment; that stretch reads VLVASVFIGALLPIPTIYIGT. The Extracellular segment spans residues 922 to 931; that stretch reads LNTEVFKQEG. A helical transmembrane segment spans residues 932-952; that stretch reads ITWEWIIVIVSVFVFFLLSEF. Over 953-967 the chain is Cytoplasmic; the sequence is YKLLKRRFIKTPYNM.

The protein belongs to the cation transport ATPase (P-type) (TC 3.A.3) family. Type IID subfamily. Requires Mg(2+) as cofactor. Post-translationally, the active site is phosphorylated in presence of sodium or potassium and in conditions of higher pH. Not phosphorylated in presence of calcium ions.

Its subcellular location is the cell membrane. The enzyme catalyses Na(+)(in) + ATP + H2O = Na(+)(out) + ADP + phosphate + H(+). The catalysed reaction is K(+)(in) + ATP + H2O = K(+)(out) + ADP + phosphate + H(+). Its function is as follows. Catalyzes the hydrolysis of ATP coupled with the export of sodium and potassium from the cell. May pump potassium inefficiently. May transport other cations such as lithium. Sodium/potassium efflux ATPases are involved in salt tolerance and maintaining the membrane potential across the plasma membrane in high salinity (Na+) or alkaline (K+) environments. This Physcomitrium patens (Spreading-leaved earth moss) protein is Sodium/potassium exporting P-type ATPase 1.